A 429-amino-acid polypeptide reads, in one-letter code: Actin-like protein 6A (429 aa).

N-acetylserine is present on S2. Residue K62 forms a Glycyl lysine isopeptide (Lys-Gly) (interchain with G-Cter in SUMO2) linkage. A phosphoserine mark is found at S86 and S233.

The protein belongs to the actin family. As to quaternary structure, component of numerous complexes with chromatin remodeling and histone acetyltransferase activity. Component of the NuA4 histone acetyltransferase complex which contains the catalytic subunit KAT5/TIP60 and the subunits EP400, TRRAP/PAF400, BRD8/SMAP, EPC1, DMAP1/DNMAP1, RUVBL1/TIP49, RUVBL2, ING3, actin, ACTL6A/BAF53A, MORF4L1/MRG15, MORF4L2/MRGX, MRGBP, YEATS4/GAS41, VPS72/YL1 and MEAF6. The NuA4 complex interacts with MYC and the adenovirus E1A protein. Component of a NuA4-related complex which contains EP400, TRRAP/PAF400, SRCAP, BRD8/SMAP, EPC1, DMAP1/DNMAP1, RUVBL1/TIP49, RUVBL2, actin, ACTL6A/BAF53A, VPS72 and YEATS4/GAS41. Component of the multiprotein chromatin-remodeling complexes SWI/SNF: SWI/SNF-A (BAF), SWI/SNF-B (PBAF) and related complexes. The canonical complex contains a catalytic subunit (either SMARCA4/BRG1/BAF190A or SMARCA2/BRM/BAF190B) and at least SMARCE1, ACTL6A/BAF53, SMARCC1/BAF155, SMARCC2/BAF170, and SMARCB1/SNF5/BAF47. Other subunits specific to each of the complexes may also be present permitting several possible combinations developmentally and tissue specific. Component of the BAF complex, which includes at least actin (ACTB), ARID1A/BAF250A, ARID1B/BAF250B, SMARCA2/BRM, SMARCA4/BRG1/BAF190A, ACTL6A/BAF53, ACTL6B/BAF53B, SMARCE1/BAF57, SMARCC1/BAF155, SMARCC2/BAF170, SMARCB1/SNF5/INI1, and one or more SMARCD1/BAF60A, SMARCD2/BAF60B, or SMARCD3/BAF60C. In muscle cells, the BAF complex also contains DPF3. Component of the BAF53 complex, at least composed of ACTL6A/BAF53A, RUVBL1/TIP49, SMARCA2/BRM/BAF190B and TRRAP/PAF400, and which may also include a HAT activity related to, but distinct from, that of KAT5. Component of neural progenitors-specific chromatin remodeling complex (npBAF complex) composed of at least, ARID1A/BAF250A or ARID1B/BAF250B, SMARCD1/BAF60A, SMARCD3/BAF60C, SMARCA2/BRM/BAF190B, SMARCA4/BRG1/BAF190A, SMARCB1/BAF47, SMARCC1/BAF155, SMARCE1/BAF57, SMARCC2/BAF170, PHF10/BAF45A, ACTL6A/BAF53A and actin. Component of SWI/SNF (GBAF) subcomplex, which includes at least BICRA or BICRAL (mutually exclusive), BRD9, SS18, SMARCA2/BRM, SMARCA4/BRG1/BAF190A, ACTL6A/BAF53, SMARCC1/BAF155, and SMARCD1/BAF60A. May be a component of the SWI/SNF-B (PBAF) chromatin remodeling complex, at least composed of SMARCA4/BRG1, SMARCB1/BAF47/SNF5, ACTL6A/BAF53A or ACTL6B/BAF53B, SMARCE1/BAF57, SMARCD1/BAF60A, SMARCD2/BAF60B, perhaps SMARCD3/BAF60C, SMARCC1/BAF155, SMARCC2/BAF170, PBRM1/BAF180, ARID2/BAF200 and actin. Interacts with SMARCA4/BRG1/BAF190A. Interacts with PHF10/BAF45A. Component of the chromatin remodeling INO80 complex; specifically part of a complex module associated with the DBINO domain of INO80. Interacts with DPF2. In terms of tissue distribution, widely expressed. Expressed selectively in neural stem and progenitor cells (at protein level).

It is found in the nucleus. Functionally, involved in transcriptional activation and repression of select genes by chromatin remodeling (alteration of DNA-nucleosome topology). Component of SWI/SNF chromatin remodeling complexes that carry out key enzymatic activities, changing chromatin structure by altering DNA-histone contacts within a nucleosome in an ATP-dependent manner. Required for maximal ATPase activity of SMARCA4/BRG1/BAF190A and for association of the SMARCA4/BRG1/BAF190A containing remodeling complex BAF with chromatin/nuclear matrix. Belongs to the neural progenitors-specific chromatin remodeling complex (npBAF complex) and is required for the proliferation of neural progenitors. During neural development a switch from a stem/progenitor to a postmitotic chromatin remodeling mechanism occurs as neurons exit the cell cycle and become committed to their adult state. The transition from proliferating neural stem/progenitor cells to postmitotic neurons requires a switch in subunit composition of the npBAF and nBAF complexes. As neural progenitors exit mitosis and differentiate into neurons, npBAF complexes which contain ACTL6A/BAF53A and PHF10/BAF45A, are exchanged for homologous alternative ACTL6B/BAF53B and DPF1/BAF45B or DPF3/BAF45C subunits in neuron-specific complexes (nBAF). The npBAF complex is essential for the self-renewal/proliferative capacity of the multipotent neural stem cells. The nBAF complex along with CREST plays a role regulating the activity of genes essential for dendrite growth. Component of the NuA4 histone acetyltransferase (HAT) complex which is involved in transcriptional activation of select genes principally by acetylation of nucleosomal histones H4 and H2A. This modification may both alter nucleosome - DNA interactions and promote interaction of the modified histones with other proteins which positively regulate transcription. This complex may be required for the activation of transcriptional programs associated with oncogene and proto-oncogene mediated growth induction, tumor suppressor mediated growth arrest and replicative senescence, apoptosis, and DNA repair. NuA4 may also play a direct role in DNA repair when recruited to sites of DNA damage. Putative core component of the chromatin remodeling INO80 complex which is involved in transcriptional regulation, DNA replication and probably DNA repair. The protein is Actin-like protein 6A (Actl6a) of Mus musculus (Mouse).